We begin with the raw amino-acid sequence, 103 residues long: UPF0091 protein PH0944 (103 aa).

It belongs to the UPF0091 family.

The chain is UPF0091 protein PH0944 from Pyrococcus horikoshii (strain ATCC 700860 / DSM 12428 / JCM 9974 / NBRC 100139 / OT-3).